The primary structure comprises 193 residues: Inosine triphosphate pyrophosphatase (193 aa).

10-15 (TGNANK) is an ITP binding site. Glu-42 lines the Mg(2+) pocket. ITP contacts are provided by residues Lys-54, 70–71 (DT), Lys-87, 146–149 (FGWD), Lys-169, and 174–175 (HR).

Belongs to the HAM1 NTPase family. In terms of assembly, homodimer. Mg(2+) is required as a cofactor. It depends on Mn(2+) as a cofactor.

It is found in the cytoplasm. The protein resides in the nucleus. The enzyme catalyses ITP + H2O = IMP + diphosphate + H(+). It catalyses the reaction dITP + H2O = dIMP + diphosphate + H(+). It carries out the reaction XTP + H2O = XMP + diphosphate + H(+). Its function is as follows. Pyrophosphatase that hydrolyzes non-canonical purine nucleotides such as inosine triphosphate (ITP), deoxyinosine triphosphate (dITP) or xanthosine 5'-triphosphate (XTP) to their respective monophosphate derivatives. The enzyme does not distinguish between the deoxy- and ribose forms. Probably excludes non-canonical purines from RNA and DNA precursor pools, thus preventing their incorporation into RNA and DNA and avoiding chromosomal lesions. This Mycosarcoma maydis (Corn smut fungus) protein is Inosine triphosphate pyrophosphatase.